Reading from the N-terminus, the 147-residue chain is Large ribosomal subunit protein uL16 (147 aa).

The protein belongs to the universal ribosomal protein uL16 family. In terms of assembly, part of the 50S ribosomal subunit.

In terms of biological role, binds 23S rRNA and is also seen to make contacts with the A and possibly P site tRNAs. The chain is Large ribosomal subunit protein uL16 from Caldicellulosiruptor saccharolyticus (strain ATCC 43494 / DSM 8903 / Tp8T 6331).